A 760-amino-acid polypeptide reads, in one-letter code: Catecholate siderophore receptor Fiu (760 aa).

The first 31 residues, 1-31 (MENNRNFPARQFHSLTFFAGLCIGITPVAQA), serve as a signal peptide directing secretion. One can recognise a TBDR plug domain in the interval 67 to 175 (PVADTTRTMT…PTGSINMISK (109 aa)). The TBDR beta-barrel domain occupies 180 to 760 (DSGIDASASI…TFLLTANMHF (581 aa)). A TonB C-terminal box motif is present at residues 743–760 (RYHPGEPRTFLLTANMHF).

The protein belongs to the TonB-dependent receptor family.

The protein resides in the cell outer membrane. In terms of biological role, involved in the active transport across the outer membrane of iron complexed with catecholate siderophores such as dihydroxybenzoylserine and dihydroxybenzoate. It derives its energy for transport by interacting with the trans-periplasmic membrane protein TonB. Can also transport catechol-substituted cephalosporins. Receptor for microcins M, H47 and E492. The polypeptide is Catecholate siderophore receptor Fiu (fiu) (Escherichia coli O6:H1 (strain CFT073 / ATCC 700928 / UPEC)).